Reading from the N-terminus, the 253-residue chain is Ubiquinone biosynthesis O-methyltransferase (253 aa).

Positions 47, 78, 99, and 141 each coordinate S-adenosyl-L-methionine.

It belongs to the methyltransferase superfamily. UbiG/COQ3 family.

It carries out the reaction a 3-demethylubiquinol + S-adenosyl-L-methionine = a ubiquinol + S-adenosyl-L-homocysteine + H(+). The enzyme catalyses a 3-(all-trans-polyprenyl)benzene-1,2-diol + S-adenosyl-L-methionine = a 2-methoxy-6-(all-trans-polyprenyl)phenol + S-adenosyl-L-homocysteine + H(+). The protein operates within cofactor biosynthesis; ubiquinone biosynthesis. Functionally, O-methyltransferase that catalyzes the 2 O-methylation steps in the ubiquinone biosynthetic pathway. The chain is Ubiquinone biosynthesis O-methyltransferase from Rhodopseudomonas palustris (strain BisB5).